The primary structure comprises 880 residues: Leucine--tRNA ligase (880 aa).

Residues 46-56 (PYPSGALHMGH) carry the 'HIGH' region motif. Residues 483 to 502 (SPIKTEPTWRQTTCPDCGGP) are disordered. The 'KMSKS' region motif lies at 638-642 (KMSKS). K641 contacts ATP.

It belongs to the class-I aminoacyl-tRNA synthetase family.

It is found in the cytoplasm. It catalyses the reaction tRNA(Leu) + L-leucine + ATP = L-leucyl-tRNA(Leu) + AMP + diphosphate. The protein is Leucine--tRNA ligase of Xanthomonas oryzae pv. oryzae (strain PXO99A).